Consider the following 819-residue polypeptide: MSKTLLSRIKPLSNPHASNSFRSHLPITPRIKKLVSDTVSILKTQQNWSQILDDCFADEEVRFVDISPFVFDRIQDVEIGVKLFDWLSSEKKDEFFSNGFACSSFLKLLARYRIFNEIEDVLGNLRNENVKLTHEALSHVLHAYAESGSLSKAVEIYDYVVELYDSVPDVIACNSLLSLLVKSRRLGDARKVYDEMCDRGDSVDNYSTCILVKGMCNEGKVEVGRKLIEGRWGKGCIPNIVFYNTIIGGYCKLGDIENAYLVFKELKLKGFMPTLETFGTMINGFCKEGDFVASDRLLSEVKERGLRVSVWFLNNIIDAKYRHGYKVDPAESIGWIIANDCKPDVATYNILINRLCKEGKKEVAVGFLDEASKKGLIPNNLSYAPLIQAYCKSKEYDIASKLLLQMAERGCKPDIVTYGILIHGLVVSGHMDDAVNMKVKLIDRGVSPDAAIYNMLMSGLCKTGRFLPAKLLFSEMLDRNILPDAYVYATLIDGFIRSGDFDEARKVFSLSVEKGVKVDVVHHNAMIKGFCRSGMLDEALACMNRMNEEHLVPDKFTYSTIIDGYVKQQDMATAIKIFRYMEKNKCKPNVVTYTSLINGFCCQGDFKMAEETFKEMQLRDLVPNVVTYTTLIRSLAKESSTLEKAVYYWELMMTNKCVPNEVTFNCLLQGFVKKTSGKVLAEPDGSNHGQSSLFSEFFHRMKSDGWSDHAAAYNSALVCLCVHGMVKTACMFQDKMVKKGFSPDPVSFAAILHGFCVVGNSKQWRNMDFCNLGEKGLEVAVRYSQVLEQHLPQPVICEASTILHAMVEKADTKEPVESP.

PPR repeat units lie at residues 98 to 132, 133 to 163, 169 to 203, 204 to 238, 239 to 273, 274 to 308, 309 to 343, 344 to 378, 379 to 413, 414 to 448, 449 to 483, 484 to 518, 519 to 553, 554 to 588, 589 to 623, 624 to 659, 709 to 743, and 744 to 779; these read NGFA…NVKL, THEA…VVEL, DVIA…GDSV, DNYS…GCIP, NIVF…GFMP, TLET…GLRV, SVWF…DCKP, DVAT…GLIP, NNLS…GCKP, DIVT…GVSP, DAAI…NILP, DAYV…GVKV, DVVH…HLVP, DKFT…KCKP, NVVT…DLVP, NVVT…KCVP, HAAA…GFSP, and DPVS…GLEV.

The protein belongs to the PPR family. P subfamily.

The protein is Pentatricopeptide repeat-containing protein At1g52620 of Arabidopsis thaliana (Mouse-ear cress).